Here is a 197-residue protein sequence, read N- to C-terminus: Probable GTP-binding protein EngB (197 aa).

The EngB-type G domain maps to 25–197; the sequence is SAPEIAFAGR…VRDEFFKFTR (173 aa). GTP contacts are provided by residues 33–40, 60–64, 79–82, 146–149, and 177–179; these read GRSNVGKS, GCTRQ, DLPG, TKID, and ISI. Residues S40 and T62 each coordinate Mg(2+).

The protein belongs to the TRAFAC class TrmE-Era-EngA-EngB-Septin-like GTPase superfamily. EngB GTPase family. Mg(2+) serves as cofactor.

Necessary for normal cell division and for the maintenance of normal septation. This is Probable GTP-binding protein EngB from Wolbachia pipientis subsp. Culex pipiens (strain wPip).